Here is a 186-residue protein sequence, read N- to C-terminus: Transcription factor HES-3 (186 aa).

The bHLH domain maps to 1 to 49; it reads MEKKRRARINVSLEQLKSLLEKHYSHQIRKRKLEKADILELSVKYMRSL. One can recognise an Orange domain in the interval 65–99; it reads QPSGFRSCLPGVSQLLRRGDEVGSGLRCPLVPESA. Positions 128-186 are disordered; sequence APAAGGPRSPPPLLLLPESLPGSSASVPPPQPASSRCAESPGLGLRVWRPWGSPGDDLN. A compositionally biased stretch (low complexity) spans 142 to 153; sequence LLPESLPGSSAS. Positions 175–178 match the WRPW motif motif; it reads WRPW.

Transcription repression requires formation of a complex with a corepressor protein of the Groucho/TLE family.

The protein resides in the nucleus. Transcriptional repressor of genes that require a bHLH protein for their transcription. The chain is Transcription factor HES-3 (HES3) from Homo sapiens (Human).